The following is a 114-amino-acid chain: MKVIAAFLLALLGGNTSPTDEDLKSILASVGADADDDKIELLLSQVKGKDITELIASGRERLASVPSGGGVAVAAAAGGGGGDAPAAAAEEPKKEEKSEEESDEELGFSLFDDN.

Residues 74 to 83 show a composition bias toward gly residues; that stretch reads AAAAGGGGGD. Residues 74 to 114 are disordered; sequence AAAAGGGGGDAPAAAAEEPKKEEKSEEESDEELGFSLFDDN. Residues 98–114 are compositionally biased toward acidic residues; the sequence is SEEESDEELGFSLFDDN.

Belongs to the eukaryotic ribosomal protein P1/P2 family. P1 and P2 exist as dimers at the large ribosomal subunit. Post-translationally, phosphorylated.

Plays an important role in the elongation step of protein synthesis. The chain is Large ribosomal subunit protein P2 from Parthenium argentatum (Guayule rubber plant).